We begin with the raw amino-acid sequence, 260 residues long: Large ribosomal subunit protein eL8A (260 aa).

The segment at 1–34 (MPSSKKVAPAPLATKSKASTSTKNPLFESTPKNF) is disordered.

Belongs to the eukaryotic ribosomal protein eL8 family. Component of the large ribosomal subunit. Mature ribosomes consist of a small (40S) and a large (60S) subunit. The 40S subunit contains about 32 different proteins and 1 molecule of RNA (18S). The 60S subunit contains 45 different proteins and 3 molecules of RNA (25S, 5.8S and 5S).

The protein resides in the cytoplasm. Its function is as follows. Component of the ribosome, a large ribonucleoprotein complex responsible for the synthesis of proteins in the cell. The small ribosomal subunit (SSU) binds messenger RNAs (mRNAs) and translates the encoded message by selecting cognate aminoacyl-transfer RNA (tRNA) molecules. The large subunit (LSU) contains the ribosomal catalytic site termed the peptidyl transferase center (PTC), which catalyzes the formation of peptide bonds, thereby polymerizing the amino acids delivered by tRNAs into a polypeptide chain. The nascent polypeptides leave the ribosome through a tunnel in the LSU and interact with protein factors that function in enzymatic processing, targeting, and the membrane insertion of nascent chains at the exit of the ribosomal tunnel. The sequence is that of Large ribosomal subunit protein eL8A from Candida albicans (strain SC5314 / ATCC MYA-2876) (Yeast).